A 198-amino-acid chain; its full sequence is Recombination protein RecR (198 aa).

The segment at 57–72 adopts a C4-type zinc-finger fold; it reads CSVCGHITENDPCYIC. The Toprim domain occupies 80-175; sequence SVICVVEDDK…KVTRLAQGLS (96 aa).

This sequence belongs to the RecR family.

Its function is as follows. May play a role in DNA repair. It seems to be involved in an RecBC-independent recombinational process of DNA repair. It may act with RecF and RecO. The polypeptide is Recombination protein RecR (Staphylococcus aureus (strain JH1)).